A 258-amino-acid chain; its full sequence is Tryptophan synthase alpha chain (258 aa).

Residues E52 and D63 each act as proton acceptor in the active site.

The protein belongs to the TrpA family. Tetramer of two alpha and two beta chains.

It carries out the reaction (1S,2R)-1-C-(indol-3-yl)glycerol 3-phosphate + L-serine = D-glyceraldehyde 3-phosphate + L-tryptophan + H2O. Its pathway is amino-acid biosynthesis; L-tryptophan biosynthesis; L-tryptophan from chorismate: step 5/5. The alpha subunit is responsible for the aldol cleavage of indoleglycerol phosphate to indole and glyceraldehyde 3-phosphate. The protein is Tryptophan synthase alpha chain of Streptococcus pneumoniae (strain Taiwan19F-14).